A 735-amino-acid polypeptide reads, in one-letter code: Serine/threonine-protein kinase BRSK2 (735 aa).

The Protein kinase domain maps to 20-271 (YRLEKTLGKG…LEHIQKHIWY (252 aa)). ATP-binding positions include 26-34 (LGKGQTGLV) and K49. D142 serves as the catalytic Proton acceptor. Position 175 is a phosphothreonine; by LKB1 (T175). At T261 the chain carries Phosphothreonine; by PKA. S295 carries the post-translational modification Phosphoserine. Residues 298–340 (DIDPDVLDSMHSLGCFRDRNKLLQDLLSEEENQEKMIYFLLLD) enclose the UBA domain. The span at 346 to 367 (PSHEDEDLPPRNEIDPPRKRVD) shows a compositional bias: basic and acidic residues. 2 disordered regions span residues 346–476 (PSHE…GVPW) and 492–516 (RFHR…SSPE). S368, S383, S394, S413, S424, and S428 each carry phosphoserine. Over residues 411–429 (SRSISGASSGLSTSPLSSP) the composition is skewed to low complexity. The segment covering 432–446 (TPHPSPRGSPLPTPK) has biased composition (pro residues). S456 is modified (phosphoserine). Residues T460, T464, and T510 each carry the phosphothreonine modification. Phosphoserine occurs at positions 513, 514, and 521. The KEN box motif lies at 604–606 (KEN). Positions 682–735 (KNGQAAQAPSTPAKRSAHGPLGDSAAAGPGGDTEYPMGKDMAKMGPPAARREQP) are disordered.

It belongs to the protein kinase superfamily. CAMK Ser/Thr protein kinase family. SNF1 subfamily. Interacts with FZR1, a regulatory subunit of the APC ubiquitin ligase complex. Interacts with COPS5. Interacts with PAK1. Mg(2+) is required as a cofactor. Post-translationally, may be phosphorylated at Thr-261 by PKA. Phosphorylated at Thr-175 by STK11/LKB1 in complex with STE20-related adapter-alpha (STRADA) pseudo kinase and CAB39. Not phosphorylated at Thr-175 by CaMKK2. In contrast, it is phosphorylated and activated by CaMKK1. May be inactivated via dephosphorylation of Thr-175 by PP2C. In terms of processing, polyubiquitinated by the APC complex in conjunction with FZR1, leading to its proteasomal degradation. Targeted for proteasomal degradation by interaction with COPS5. BRSK2 levels change during the cell cycle. BRSK2 levels are low at the G1/S boundary and gradually increase as cells progress into G2 phase. BRSK2 levels decrease rapidly at the end of mitosis. In terms of tissue distribution, detected in pancreas islets and in brain (at protein level). Detected in brain and pancreas.

The protein localises to the cytoplasm. It localises to the cytoskeleton. Its subcellular location is the microtubule organizing center. The protein resides in the centrosome. It is found in the perinuclear region. The protein localises to the endoplasmic reticulum. The enzyme catalyses L-seryl-[protein] + ATP = O-phospho-L-seryl-[protein] + ADP + H(+). The catalysed reaction is L-threonyl-[protein] + ATP = O-phospho-L-threonyl-[protein] + ADP + H(+). It carries out the reaction L-seryl-[tau protein] + ATP = O-phospho-L-seryl-[tau protein] + ADP + H(+). It catalyses the reaction L-threonyl-[tau protein] + ATP = O-phospho-L-threonyl-[tau protein] + ADP + H(+). Its activity is regulated as follows. Activated by phosphorylation on Thr-175 by STK11/LKB1. Functionally, serine/threonine-protein kinase that plays a key role in polarization of neurons and axonogenesis, cell cycle progress and insulin secretion. Phosphorylates CDK16, CDC25C, MAPT/TAU, PAK1 and WEE1. Following phosphorylation and activation by STK11/LKB1, acts as a key regulator of polarization of cortical neurons, probably by mediating phosphorylation of microtubule-associated proteins such as MAPT/TAU at 'Thr-504' and 'Ser-554'. Also regulates neuron polarization by mediating phosphorylation of WEE1 at 'Ser-642' in post-mitotic neurons, leading to down-regulate WEE1 activity in polarized neurons. Plays a role in the regulation of the mitotic cell cycle progress and the onset of mitosis. Plays a role in the regulation of insulin secretion in response to elevated glucose levels, probably via phosphorylation of CDK16 and PAK1. While BRSK2 phosphorylated at Thr-175 can inhibit insulin secretion, BRSK2 phosphorylated at Thr-261 can promote insulin secretion. Regulates reorganization of the actin cytoskeleton. May play a role in the apoptotic response triggered by endoplasmic reticulum (ER) stress. This chain is Serine/threonine-protein kinase BRSK2 (Brsk2), found in Mus musculus (Mouse).